Reading from the N-terminus, the 1331-residue chain is uncharacterized protein (1331 aa).

The next 8 membrane-spanning stretches (helical) occupy residues 373–393, 487–507, 534–554, 579–599, 653–673, 1206–1226, 1255–1275, and 1297–1317; these read VIGVGISPDFVYPVFSASLIV, ALFLTIAILTVAIIVSILILI, LLIFGLIPAIVGAISGYSFGI, VVGLLFFSLFVILIMSSISLL, LVFLTLMSSFTMMILNLSFAT, VIAVIIPIIMLIILLVSTTLI, IPLFAFGLLISIPFSIYLIAL, and AIGSMLVLLAVLSITFVLNWL.

This sequence belongs to the ABC-4 integral membrane protein family.

It localises to the cell membrane. This is an uncharacterized protein from Mycoplasma genitalium (strain ATCC 33530 / DSM 19775 / NCTC 10195 / G37) (Mycoplasmoides genitalium).